Reading from the N-terminus, the 158-residue chain is Transcriptional repressor NrdR (158 aa).

The segment at Cys-3 to Cys-34 is a zinc-finger region. Residues Ile-49–Asp-139 enclose the ATP-cone domain.

This sequence belongs to the NrdR family. It depends on Zn(2+) as a cofactor.

Its function is as follows. Negatively regulates transcription of bacterial ribonucleotide reductase nrd genes and operons by binding to NrdR-boxes. The chain is Transcriptional repressor NrdR from Prochlorococcus marinus (strain MIT 9303).